The following is a 212-amino-acid chain: Probable GTP-binding protein EngB (212 aa).

The EngB-type G domain occupies 38-210 (SLPEIAFVGK…KASLAKCIKF (173 aa)). GTP contacts are provided by residues 46–53 (GKSNVGKS), 73–77 (GRTRQ), 91–94 (DLPG), 158–161 (TKSD), and 189–191 (VSN). Mg(2+)-binding residues include Ser53 and Thr75.

The protein belongs to the TRAFAC class TrmE-Era-EngA-EngB-Septin-like GTPase superfamily. EngB GTPase family. Mg(2+) is required as a cofactor.

Functionally, necessary for normal cell division and for the maintenance of normal septation. The protein is Probable GTP-binding protein EngB of Rickettsia rickettsii (strain Sheila Smith).